The chain runs to 420 residues: tRNA(Ile)-lysidine synthase, chloroplastic (420 aa).

S63 to S68 contacts ATP.

It belongs to the tRNA(Ile)-lysidine synthase family.

It is found in the plastid. The protein resides in the chloroplast. It carries out the reaction cytidine(34) in tRNA(Ile2) + L-lysine + ATP = lysidine(34) in tRNA(Ile2) + AMP + diphosphate + H(+). Functionally, ligates lysine onto the cytidine present at position 34 of the AUA codon-specific tRNA(Ile) that contains the anticodon CAU, in an ATP-dependent manner. Cytidine is converted to lysidine, thus changing the amino acid specificity of the tRNA from methionine to isoleucine. The sequence is that of tRNA(Ile)-lysidine synthase, chloroplastic from Zygnema circumcarinatum (Green alga).